A 274-amino-acid polypeptide reads, in one-letter code: Membrane protein insertase YidC 2 (274 aa).

The first 20 residues, 1 to 20, serve as a signal peptide directing secretion; it reads MKKKLKLTSLLGLSLLIMTA. C21 carries N-palmitoyl cysteine lipidation. C21 is lipidated: S-diacylglycerol cysteine. A run of 4 helical transmembrane segments spans residues 56-76, 128-148, 167-187, and 205-225; these read ISIGVGIILFTVLIRTVLLPV, SDSLWPILIQMPVILALFQAL, VDTTLVLPILAAVFTFLSTWL, and GIPVLIFIFAVYAPGGVALYW.

This sequence belongs to the OXA1/ALB3/YidC family. Type 2 subfamily.

The protein resides in the cell membrane. Required for the insertion and/or proper folding and/or complex formation of integral membrane proteins into the membrane. Involved in integration of membrane proteins that insert both dependently and independently of the Sec translocase complex, as well as at least some lipoproteins. The sequence is that of Membrane protein insertase YidC 2 from Streptococcus pneumoniae serotype 4 (strain ATCC BAA-334 / TIGR4).